A 447-amino-acid polypeptide reads, in one-letter code: GTPase Der (447 aa).

2 consecutive EngA-type G domains span residues 4–165 and 180–357; these read KIIT…PEEE and LQIV…KIWN. GTP is bound by residues 10 to 17, 57 to 61, 119 to 122, 186 to 193, 233 to 237, and 298 to 301; these read GRPNVGKS, DTPGL, NKCE, GRPNAGKS, DTAGL, and NKWD. One can recognise a KH-like domain in the interval 358-443; that stretch reads KKITTSKLNE…PIRFTYVKTK (86 aa).

The protein belongs to the TRAFAC class TrmE-Era-EngA-EngB-Septin-like GTPase superfamily. EngA (Der) GTPase family. In terms of assembly, associates with the 50S ribosomal subunit.

Its function is as follows. GTPase that plays an essential role in the late steps of ribosome biogenesis. In Rickettsia felis (strain ATCC VR-1525 / URRWXCal2) (Rickettsia azadi), this protein is GTPase Der.